Reading from the N-terminus, the 570-residue chain is Frizzled-2 (570 aa).

An N-terminal signal peptide occupies residues M1–A28. The Extracellular portion of the chain corresponds to Q29–W252. An FZ domain is found at P39–Q158. 5 disulfide bridges follow: C44-C105, C52-C98, C89-C126, C115-C155, and C119-C143. N-linked (GlcNAc...) asparagine glycosylation occurs at N58. An N-linked (GlcNAc...) asparagine glycan is attached at N159. Residues P166–P194 are disordered. Residues P179–S193 show a composition bias toward gly residues. A helical transmembrane segment spans residues I253–V273. Residues D274–P284 are Cytoplasmic-facing. The helical transmembrane segment at I285–L305 threads the bilayer. Residues Q306–C332 are Extracellular-facing. The helical transmembrane segment at T333 to L353 threads the bilayer. At S354 to Q375 the chain is on the cytoplasmic side. A helical transmembrane segment spans residues Y376 to G396. Residues Q397 to G419 lie on the Extracellular side of the membrane. Residues F420–F440 traverse the membrane as a helical segment. The Cytoplasmic segment spans residues V441 to R466. Residues I467–Y487 traverse the membrane as a helical segment. The Extracellular portion of the chain corresponds to E488–T524. The chain crosses the membrane as a helical span at residues V525 to W545. Over S546–V570 the chain is Cytoplasmic. The Lys-Thr-X-X-X-Trp motif, mediates interaction with the PDZ domain of Dvl family members signature appears at K548–W553. A PDZ-binding motif is present at residues T568 to V570.

It belongs to the G-protein coupled receptor Fz/Smo family. In terms of processing, ubiquitinated by ZNRF3, leading to its degradation by the proteasome. Expressed in embryonic and adult heart, lung, chondrocytes and brain. Also expressed in the developing gastrointestinal tract (strongest in foregut), much weaker expression in the adult. No expression in fetal liver and adult spleen. Up-regulated in esophageal squamous cell carcinomas.

The protein resides in the membrane. Its subcellular location is the cell membrane. Its function is as follows. Receptor for Wnt proteins. Most of frizzled receptors are coupled to the beta-catenin canonical signaling pathway, which leads to the activation of disheveled proteins, inhibition of GSK-3 kinase, nuclear accumulation of beta-catenin and activation of Wnt target genes. A second signaling pathway involving PKC and calcium fluxes has been seen for some family members, but it is not yet clear if it represents a distinct pathway or if it can be integrated in the canonical pathway, as PKC seems to be required for Wnt-mediated inactivation of GSK-3 kinase. Both pathways seem to involve interactions with G-proteins. May be involved in transduction and intercellular transmission of polarity information during tissue morphogenesis and/or in differentiated tissues. This is Frizzled-2 (Fzd2) from Mus musculus (Mouse).